The primary structure comprises 570 residues: Formate--tetrahydrofolate ligase (570 aa).

65–72 provides a ligand contact to ATP; it reads TPHGEGKT.

It belongs to the formate--tetrahydrofolate ligase family.

The catalysed reaction is (6S)-5,6,7,8-tetrahydrofolate + formate + ATP = (6R)-10-formyltetrahydrofolate + ADP + phosphate. The protein operates within one-carbon metabolism; tetrahydrofolate interconversion. This chain is Formate--tetrahydrofolate ligase, found in Shewanella putrefaciens (strain CN-32 / ATCC BAA-453).